Reading from the N-terminus, the 299-residue chain is tRNA pseudouridine synthase B (299 aa).

Asp-47 serves as the catalytic Nucleophile.

Belongs to the pseudouridine synthase TruB family. Type 1 subfamily.

The enzyme catalyses uridine(55) in tRNA = pseudouridine(55) in tRNA. Responsible for synthesis of pseudouridine from uracil-55 in the psi GC loop of transfer RNAs. This Dechloromonas aromatica (strain RCB) protein is tRNA pseudouridine synthase B.